Reading from the N-terminus, the 428-residue chain is Pyruvate dehydrogenase E1 component subunit alpha-3, chloroplastic (428 aa).

A chloroplast-targeting transit peptide spans 1-61 (MATAFAPTKL…NATRRSPVVS (61 aa)). Pyruvate-binding residues include His115, Tyr141, Arg142, Ala190, Ile192, Asp227, Gly228, and Asn256. Positions 141, 142, 190, 192, 227, 228, 256, and 325 each coordinate thiamine diphosphate. Asp227 contributes to the Mg(2+) binding site. Asn256 is a Mg(2+) binding site.

As to quaternary structure, tetramer of 2 alpha and 2 beta subunits. The cofactor is thiamine diphosphate. Mg(2+) serves as cofactor.

Its subcellular location is the plastid. It localises to the chloroplast. The enzyme catalyses N(6)-[(R)-lipoyl]-L-lysyl-[protein] + pyruvate + H(+) = N(6)-[(R)-S(8)-acetyldihydrolipoyl]-L-lysyl-[protein] + CO2. The pyruvate dehydrogenase complex catalyzes the overall conversion of pyruvate to acetyl-CoA and CO(2). It contains multiple copies of three enzymatic components: pyruvate dehydrogenase (E1), dihydrolipoamide acetyltransferase (E2) and lipoamide dehydrogenase (E3). The sequence is that of Pyruvate dehydrogenase E1 component subunit alpha-3, chloroplastic (PDH-E1 ALPHA) from Arabidopsis thaliana (Mouse-ear cress).